A 571-amino-acid chain; its full sequence is Sulfite reductase [NADPH] hemoprotein beta-component (571 aa).

Residues C435, C441, C480, and C484 each coordinate [4Fe-4S] cluster. A siroheme-binding site is contributed by C484.

The protein belongs to the nitrite and sulfite reductase 4Fe-4S domain family. Alpha(8)-beta(8). The alpha component is a flavoprotein, the beta component is a hemoprotein. Siroheme is required as a cofactor. The cofactor is [4Fe-4S] cluster.

It carries out the reaction hydrogen sulfide + 3 NADP(+) + 3 H2O = sulfite + 3 NADPH + 4 H(+). Its pathway is sulfur metabolism; hydrogen sulfide biosynthesis; hydrogen sulfide from sulfite (NADPH route): step 1/1. Component of the sulfite reductase complex that catalyzes the 6-electron reduction of sulfite to sulfide. This is one of several activities required for the biosynthesis of L-cysteine from sulfate. The chain is Sulfite reductase [NADPH] hemoprotein beta-component from Erwinia tasmaniensis (strain DSM 17950 / CFBP 7177 / CIP 109463 / NCPPB 4357 / Et1/99).